Here is a 323-residue protein sequence, read N- to C-terminus: Large ribosomal subunit protein uL10 (323 aa).

Positions A296–F323 are disordered. Positions E308–F317 are enriched in acidic residues.

Belongs to the universal ribosomal protein uL10 family. In terms of assembly, P0 forms a pentameric complex by interaction with dimers of P1 and P2. In terms of processing, phosphorylated.

Functionally, ribosomal protein P0 is the functional equivalent of E.coli protein L10. The polypeptide is Large ribosomal subunit protein uL10 (LIPO-A) (Leishmania infantum).